A 98-amino-acid chain; its full sequence is Cysteine-rich and transmembrane domain-containing protein WIH2 (98 aa).

The disordered stretch occupies residues 1-77; it reads MSQYNQPPVG…PPQHQQQQSS (77 aa). Over residues 9–21 the composition is skewed to pro residues; the sequence is VGVPPPQGYPPEG. Positions 37–55 are enriched in low complexity; it reads YPQQGYPPQGYPQQGYPQQ. Over residues 56 to 70 the composition is skewed to pro residues; it reads GYPPPYAPQYPPPPQ. Residues 75–92 traverse the membrane as a helical segment; the sequence is QSSPGFLEGCLAALCCCC.

It belongs to the CYSTM1 family. Expressed in floral organ primordia.

The protein localises to the membrane. Its function is as follows. Required for the promotion of megasporogenesis, or promotion of germ cell formation from somatic precursor cells. Acts redundantly with WIH1. Functions in a genetic pathway downstream of SPL/NZZ and WUS and together with TRN2 in promoting megasporogenesis. This is Cysteine-rich and transmembrane domain-containing protein WIH2 from Arabidopsis thaliana (Mouse-ear cress).